Reading from the N-terminus, the 455-residue chain is tRNA modification GTPase MnmE (455 aa).

R24, E81, and K120 together coordinate (6S)-5-formyl-5,6,7,8-tetrahydrofolate. A TrmE-type G domain is found at G216–G378. Position 226 (N226) interacts with K(+). GTP contacts are provided by residues N226 to S231, T245 to T251, D270 to G273, N335 to D338, and S359 to R361. S230 provides a ligand contact to Mg(2+). K(+)-binding residues include T245, I247, and T250. Residue T251 participates in Mg(2+) binding. K455 provides a ligand contact to (6S)-5-formyl-5,6,7,8-tetrahydrofolate.

This sequence belongs to the TRAFAC class TrmE-Era-EngA-EngB-Septin-like GTPase superfamily. TrmE GTPase family. Homodimer. Heterotetramer of two MnmE and two MnmG subunits. Requires K(+) as cofactor.

The protein localises to the cytoplasm. In terms of biological role, exhibits a very high intrinsic GTPase hydrolysis rate. Involved in the addition of a carboxymethylaminomethyl (cmnm) group at the wobble position (U34) of certain tRNAs, forming tRNA-cmnm(5)s(2)U34. This is tRNA modification GTPase MnmE from Pseudomonas aeruginosa (strain ATCC 15692 / DSM 22644 / CIP 104116 / JCM 14847 / LMG 12228 / 1C / PRS 101 / PAO1).